The primary structure comprises 1375 residues: MAQANSRSRNSATISYPEKRRARVNLGKREVEILKTPYLLETQIESYRKFLQKDIAAEKREDNGLHAAFKSVFPITSYSGYAVLEYVGYSLGGESTLFDVEECKLRGLTYAAPLKVNMRLVIYDKEAPAGKKAIKDIKEQEVYMGEIPLMTETGSLVINGTERVVVSQLHRSPGVFFEHDKGKTHSSGKLLYSARVIPYRGSWLDFEFDPKDCLFVRIDRRRKLPATVILRALGYDTEQILDMFYKTNHFHLNQETVTLDLIPQRLRGELAVVEIKDKKGKVIVEANRRISARHIRLIEKAEINKLELPDDYLYGKVIGKTIIDKETGEIIAHANEEITAELLKNLRATKTASLDTLYINEIECGPYVSDTLRLDTTTNQLEALVEIYRIMRPGEPPTKEAAESLFENLFFSPERYSLSAVGRMKFNRRVGRKELTGLDVLSKEDIVDVLRVLVDIRDGKGDVDDIDHLGNRRIRSVGEMAENQFRVGLVRVERAVKDRLSLADVENLMPQDLVNAKPVSAAIKEFFGSSQLSQFMDQNNPLSEITHKRRVSALGPGGLTRERAGFEVRDVHVTHYGRVCPIETPEGPNIGLINSLAVFARANEYGFLETPYRKVVDRVVTDETEYLSAIEEGDYYIAQANTNVDEKGRLVDDLISCRYKGEFTLTTPDKINYMDVSPRQIVSVAAALIPFLEHDDANRALMGSNMQRQAVPTIRPETPLVGTGMERTVAVDSGVTVIAKRSGVIDSVDASRIVVRVDRKETEDDDDIGVDIYNLTKFTRSNQNTCINQHPIVEVGDKVQKGDVLADGPSTDIGELALGQNLLVAFMPWNGYNFEDSILISERLVEEDRFTTIHIQEFTCVARDTKLGPEEITSDIPNVGESALAKLDESGIVHIGAEVNAGDILVGKVTPKGETQLTPEEKLLRAIFGEKASDVKDTSLRVTPGITGTVIDVRIFTREGVKKDERTLEIEKAELSKVEKDLNDELRVREDALFENLEKLLTGRVAAGGPNKLAKGTKITKSYLADLPRQKWFEIRLQDDAATKRLEASHEHFKELRETRDAKLKDSRQKLTQGGDLAPGVIKIVKVYLAVKRRIQPGDKMAGRHGNKGVISTIVPIEDMPYLEDGTPVDIVLNPLGVPSRMNIGQVLETHLGWAAKGLGKKIGEMIEKGADAKELRKSLKPIYDLSKTQRFDLEALEDPEIVMLAKNLRKGVPISSPVFDGATEEEIKQLLKMADLPTSGQAALYDGRTGKKFDRSVTVGYMYMLKLNHLVDDKMHARSTGSYSLVTQQPLGGKAQFGGQRFGEMEVWALEAYGAAYTLQEMLTVKSDDVAGRTRMYKNIVDGDHRMDAGMPESFNVLVKEIRSLAIDIGLEND.

Belongs to the RNA polymerase beta chain family. The RNAP catalytic core consists of 2 alpha, 1 beta, 1 beta' and 1 omega subunit. When a sigma factor is associated with the core the holoenzyme is formed, which can initiate transcription.

The enzyme catalyses RNA(n) + a ribonucleoside 5'-triphosphate = RNA(n+1) + diphosphate. In terms of biological role, DNA-dependent RNA polymerase catalyzes the transcription of DNA into RNA using the four ribonucleoside triphosphates as substrates. This chain is DNA-directed RNA polymerase subunit beta, found in Coxiella burnetii (strain CbuG_Q212) (Coxiella burnetii (strain Q212)).